The following is an 81-amino-acid chain: Costars family protein ABRACL (81 aa).

N-acetylmethionine is present on M1.

Belongs to the costars family.

In Bos taurus (Bovine), this protein is Costars family protein ABRACL (ABRACL).